The following is a 184-amino-acid chain: ADP-ribosylation factor-like protein 3 (184 aa).

Gly-2 carries N-myristoyl glycine lipidation. GTP-binding positions include 24-31, 68-72, and 127-130; these read GLDNAGKT, DIGGQ, and NKQD.

This sequence belongs to the small GTPase superfamily. Arf family.

The protein resides in the golgi apparatus. In terms of biological role, GTP-binding protein that may be involved in protein trafficking; may modulate vesicle budding and uncoating within the Golgi apparatus. In Caenorhabditis elegans, this protein is ADP-ribosylation factor-like protein 3 (arl-3).